The primary structure comprises 226 residues: ATP-dependent dethiobiotin synthetase BioD (226 aa).

Position 13-18 (13-18) interacts with ATP; sequence DVGKTL. Threonine 17 contacts Mg(2+). The active site involves lysine 38. ATP contacts are provided by residues aspartate 55, 117–120, 177–178, 206–208, and glutamate 213; these read EGAG, NR, and PFV. Residues aspartate 55 and glutamate 117 each contribute to the Mg(2+) site.

The protein belongs to the dethiobiotin synthetase family. As to quaternary structure, homodimer. The cofactor is Mg(2+).

The protein resides in the cytoplasm. The enzyme catalyses (7R,8S)-7,8-diammoniononanoate + CO2 + ATP = (4R,5S)-dethiobiotin + ADP + phosphate + 3 H(+). The protein operates within cofactor biosynthesis; biotin biosynthesis; biotin from 7,8-diaminononanoate: step 1/2. Its function is as follows. Catalyzes a mechanistically unusual reaction, the ATP-dependent insertion of CO2 between the N7 and N8 nitrogen atoms of 7,8-diaminopelargonic acid (DAPA, also called 7,8-diammoniononanoate) to form a ureido ring. The chain is ATP-dependent dethiobiotin synthetase BioD from Aeromonas salmonicida (strain A449).